The chain runs to 421 residues: Uracil permease (421 aa).

The next 12 membrane-spanning stretches (helical) occupy residues 18–38 (IPLSLQHLFAMFGSTVLVPML), 41–61 (INPAICLLMNGIGTLIYIFLC), 65–85 (IPAYLGSSFAFISPVLIVIST), 89–109 (EAALSGFLVVGLVFCLIGLLV), 115–135 (GWIEIVFPPAAMGAIVAVIGL), 160–180 (PKVIAVSLVTLLTAVVGNVMF), 186–206 (IIPILISIIVGYALAAFLGIV), 232–252 (IAIIVPAALVVVAEHIGHLIV), 304–324 (VYSIWIIGGAAVMAIVLSFVG), 329–349 (LIQTIPVPVMGGVSILLFGVI), 371–391 (ILTAVVLIIGISGAAFKWGNF), and 393–413 (MKGMALATVIAILLGLFFNII).

The protein belongs to the nucleobase:cation symporter-2 (NCS2) (TC 2.A.40) family.

Its subcellular location is the cell membrane. Inhibited by the proton gradient disruptor carbonyl cyanide m-chlorophenylhydrazone (CCCP), but not by the sodium gradient disruptor ouabain. Both xanthine and uric acid act as competitive inhibitors of uracil transport. Specific for the uptake of uracil. Transport is probably proton-dependent. The chain is Uracil permease from Paenibacillus larvae subsp. larvae (strain NRRL B-3650 / LMG 16245).